A 188-amino-acid chain; its full sequence is Adenine phosphoribosyltransferase (188 aa).

The protein belongs to the purine/pyrimidine phosphoribosyltransferase family. As to quaternary structure, homodimer.

The protein localises to the cytoplasm. It catalyses the reaction AMP + diphosphate = 5-phospho-alpha-D-ribose 1-diphosphate + adenine. The protein operates within purine metabolism; AMP biosynthesis via salvage pathway; AMP from adenine: step 1/1. Catalyzes a salvage reaction resulting in the formation of AMP, that is energically less costly than de novo synthesis. The protein is Adenine phosphoribosyltransferase of Burkholderia multivorans (strain ATCC 17616 / 249).